The chain runs to 319 residues: Lipoyl synthase (319 aa).

The tract at residues 6–29 (DTVSANPVRPRHPEKAARPDALSP) is disordered. Residues 16–29 (RHPEKAARPDALSP) show a composition bias toward basic and acidic residues. [4Fe-4S] cluster contacts are provided by C61, C66, C72, C87, C91, C94, and S300. Residues 73–289 (WDKKHATFMI…QTTAYAKGFL (217 aa)) enclose the Radical SAM core domain.

The protein belongs to the radical SAM superfamily. Lipoyl synthase family. [4Fe-4S] cluster is required as a cofactor.

The protein localises to the cytoplasm. The enzyme catalyses [[Fe-S] cluster scaffold protein carrying a second [4Fe-4S](2+) cluster] + N(6)-octanoyl-L-lysyl-[protein] + 2 oxidized [2Fe-2S]-[ferredoxin] + 2 S-adenosyl-L-methionine + 4 H(+) = [[Fe-S] cluster scaffold protein] + N(6)-[(R)-dihydrolipoyl]-L-lysyl-[protein] + 4 Fe(3+) + 2 hydrogen sulfide + 2 5'-deoxyadenosine + 2 L-methionine + 2 reduced [2Fe-2S]-[ferredoxin]. It functions in the pathway protein modification; protein lipoylation via endogenous pathway; protein N(6)-(lipoyl)lysine from octanoyl-[acyl-carrier-protein]: step 2/2. Functionally, catalyzes the radical-mediated insertion of two sulfur atoms into the C-6 and C-8 positions of the octanoyl moiety bound to the lipoyl domains of lipoate-dependent enzymes, thereby converting the octanoylated domains into lipoylated derivatives. The polypeptide is Lipoyl synthase (Rhodopseudomonas palustris (strain ATCC BAA-98 / CGA009)).